We begin with the raw amino-acid sequence, 300 residues long: MASENKYSFNKLQKRIRRDAGKAIQDFGMIEDGDHIMVCLSGGKDSYTLLDTLLYLQKVAPVRFSLVAVNLDQKQPGFPEHVLPAYLNKLGVDYKIVEEDTYSIVKEKIPEGKTTCSLCSRLRRGILYRTAKELKATKIALGHHRDDMIETLFLNMFHGGKLKSMPPKLASDNGEHVVIRPLAYAREKDIEQYSAAMEFPIIPCNLCGSQENLQRKQIKQMLNGWDKQFPGRIESLFTAMQNVVPSHLADSALFDFKAVTADGVADENGDKAFDTDSFTTNFETEDSPVFASNIPIKHLA.

The PP-loop motif motif lies at 41-46 (SGGKDS). 3 residues coordinate [4Fe-4S] cluster: Cys-116, Cys-119, and Cys-207.

The protein belongs to the TtcA family. Homodimer. Mg(2+) is required as a cofactor. Requires [4Fe-4S] cluster as cofactor.

Its subcellular location is the cytoplasm. The catalysed reaction is cytidine(32) in tRNA + S-sulfanyl-L-cysteinyl-[cysteine desulfurase] + AH2 + ATP = 2-thiocytidine(32) in tRNA + L-cysteinyl-[cysteine desulfurase] + A + AMP + diphosphate + H(+). Its pathway is tRNA modification. Catalyzes the ATP-dependent 2-thiolation of cytidine in position 32 of tRNA, to form 2-thiocytidine (s(2)C32). The sulfur atoms are provided by the cysteine/cysteine desulfurase (IscS) system. In Idiomarina loihiensis (strain ATCC BAA-735 / DSM 15497 / L2-TR), this protein is tRNA-cytidine(32) 2-sulfurtransferase.